A 212-amino-acid chain; its full sequence is ER lumen protein-retaining receptor 1 (212 aa).

Topologically, residues 1-4 (MNIF) are lumenal. The helical transmembrane segment at 5-24 (RFLGDISHLSAILILLLKIW) threads the bilayer. Over 25 to 32 (KSRSCAGI) the chain is Cytoplasmic. The helical transmembrane segment at 33-52 (SGKSQLLFAIVFTTRYLDLF) threads the bilayer. The interaction with the K-D-E-L motif on target proteins stretch occupies residues 47-48 (RY). Topologically, residues 53-58 (TNFISL) are lumenal. A helical membrane pass occupies residues 59 to 79 (YNTSMKMVYVASSYATIWMIY). The Cytoplasmic portion of the chain corresponds to 80-92 (SKFKATYDGNHDT). Residues 93-110 (FRVEFLIVPTAILAFLVN) traverse the membrane as a helical segment. Residues 111-116 (HDFTPL) are Lumenal-facing. The helical transmembrane segment at 117–135 (EILWTFSIYLESVAILPQL) threads the bilayer. The Cytoplasmic portion of the chain corresponds to 136 to 149 (FMVSKTGEAETITS). A helical membrane pass occupies residues 150–168 (HYLFALGIYRALYLFNWIW). Residues 159–169 (RALYLFNWIWR) are interaction with the K-D-E-L motif on target proteins. Over 169–178 (RYQFEGFFDL) the chain is Lumenal. Residues 179-199 (IAIVAGLVQTVLYCDFFYLYI) traverse the membrane as a helical segment. The Cytoplasmic segment spans residues 200 to 212 (TKVLKGKKLSLPA). Positions 204 to 207 (KGKK) are important for recycling of cargo proteins with the sequence motif K-D-E-L from the Golgi to the endoplasmic reticulum.

Belongs to the ERD2 family.

Its subcellular location is the golgi apparatus membrane. The protein resides in the cytoplasmic vesicle. The protein localises to the COPI-coated vesicle membrane. It is found in the endoplasmic reticulum membrane. It localises to the endoplasmic reticulum-Golgi intermediate compartment membrane. Receptor for the C-terminal sequence motif K-D-E-L that is present on endoplasmic reticulum resident proteins and that mediates their recycling from the Golgi back to the endoplasmic reticulum. The chain is ER lumen protein-retaining receptor 1 (kdelr1) from Xenopus tropicalis (Western clawed frog).